We begin with the raw amino-acid sequence, 244 residues long: ATP synthase subunit a, chloroplastic (244 aa).

5 consecutive transmembrane segments (helical) span residues 35–55, 92–112, 131–151, 196–216, and 217–237; these read QVLITSWVVIAILLGSAAIAV, VPFIGTLFLFIFVSNWSGALL, INTTVALALLTSVAYFYAGIT, LVVVVLVSLVPLVVPIPVMFL, and GLFTSGIQALIFATLAAAYIG.

The protein belongs to the ATPase A chain family. As to quaternary structure, F-type ATPases have 2 components, CF(1) - the catalytic core - and CF(0) - the membrane proton channel. CF(1) has five subunits: alpha(3), beta(3), gamma(1), delta(1), epsilon(1). CF(0) has four main subunits: a, b, b' and c.

The protein localises to the plastid. It is found in the chloroplast thylakoid membrane. Functionally, key component of the proton channel; it plays a direct role in the translocation of protons across the membrane. This chain is ATP synthase subunit a, chloroplastic, found in Coffea arabica (Arabian coffee).